A 212-amino-acid chain; its full sequence is Probable nicotinate-nucleotide adenylyltransferase (212 aa).

It belongs to the NadD family.

It catalyses the reaction nicotinate beta-D-ribonucleotide + ATP + H(+) = deamido-NAD(+) + diphosphate. It functions in the pathway cofactor biosynthesis; NAD(+) biosynthesis; deamido-NAD(+) from nicotinate D-ribonucleotide: step 1/1. Its function is as follows. Catalyzes the reversible adenylation of nicotinate mononucleotide (NaMN) to nicotinic acid adenine dinucleotide (NaAD). This is Probable nicotinate-nucleotide adenylyltransferase from Shewanella sp. (strain MR-7).